We begin with the raw amino-acid sequence, 202 residues long: Nucleoid occlusion factor SlmA (202 aa).

An HTH tetR-type domain is found at 14 to 75; it reads KERQQQVLEV…ALIERIEQTL (62 aa). The segment at residues 38–57 is a DNA-binding region (H-T-H motif); that stretch reads TTERLAKAVGVSEGALYRYF.

This sequence belongs to the nucleoid occlusion factor SlmA family. As to quaternary structure, homodimer. Interacts with FtsZ.

It localises to the cytoplasm. The protein resides in the nucleoid. Required for nucleoid occlusion (NO) phenomenon, which prevents Z-ring formation and cell division over the nucleoid. Acts as a DNA-associated cell division inhibitor that binds simultaneously chromosomal DNA and FtsZ, and disrupts the assembly of FtsZ polymers. SlmA-DNA-binding sequences (SBS) are dispersed on non-Ter regions of the chromosome, preventing FtsZ polymerization at these regions. The protein is Nucleoid occlusion factor SlmA of Actinobacillus pleuropneumoniae serotype 5b (strain L20).